The primary structure comprises 448 residues: Probable tryptophanase (448 aa).

Lys-253 is modified (N6-(pyridoxal phosphate)lysine).

It belongs to the beta-eliminating lyase family. The cofactor is pyridoxal 5'-phosphate.

The catalysed reaction is L-tryptophan + H2O = indole + pyruvate + NH4(+). It participates in amino-acid degradation; L-tryptophan degradation via pyruvate pathway; indole and pyruvate from L-tryptophan: step 1/1. The chain is Probable tryptophanase from Halobacterium salinarum (strain ATCC 29341 / DSM 671 / R1).